The chain runs to 1183 residues: ATP-dependent helicase/nuclease subunit A (1183 aa).

Residues 3-461 (VQWTDEQQRA…IDLTKNFRSR (459 aa)) enclose the UvrD-like helicase ATP-binding domain. 24-31 (AAAGSGKT) lines the ATP pocket. Residues 473–769 (RQVMDEAVGE…RIMTIHQSKG (297 aa)) form the UvrD-like helicase C-terminal domain.

The protein belongs to the helicase family. AddA subfamily. As to quaternary structure, heterodimer of AddA and AddB/RexB. The cofactor is Mg(2+).

It catalyses the reaction Couples ATP hydrolysis with the unwinding of duplex DNA by translocating in the 3'-5' direction.. It carries out the reaction ATP + H2O = ADP + phosphate + H(+). In terms of biological role, the heterodimer acts as both an ATP-dependent DNA helicase and an ATP-dependent, dual-direction single-stranded exonuclease. Recognizes the chi site generating a DNA molecule suitable for the initiation of homologous recombination. The AddA nuclease domain is required for chi fragment generation; this subunit has the helicase and 3' -&gt; 5' nuclease activities. The sequence is that of ATP-dependent helicase/nuclease subunit A from Exiguobacterium sibiricum (strain DSM 17290 / CCUG 55495 / CIP 109462 / JCM 13490 / 255-15).